A 157-amino-acid polypeptide reads, in one-letter code: Crossover junction endodeoxyribonuclease RuvC (157 aa).

Active-site residues include D7, E67, and D140. The Mg(2+) site is built by D7, E67, and D140.

Belongs to the RuvC family. Homodimer which binds Holliday junction (HJ) DNA. The HJ becomes 2-fold symmetrical on binding to RuvC with unstacked arms; it has a different conformation from HJ DNA in complex with RuvA. In the full resolvosome a probable DNA-RuvA(4)-RuvB(12)-RuvC(2) complex forms which resolves the HJ. Requires Mg(2+) as cofactor.

The protein localises to the cytoplasm. It carries out the reaction Endonucleolytic cleavage at a junction such as a reciprocal single-stranded crossover between two homologous DNA duplexes (Holliday junction).. In terms of biological role, the RuvA-RuvB-RuvC complex processes Holliday junction (HJ) DNA during genetic recombination and DNA repair. Endonuclease that resolves HJ intermediates. Cleaves cruciform DNA by making single-stranded nicks across the HJ at symmetrical positions within the homologous arms, yielding a 5'-phosphate and a 3'-hydroxyl group; requires a central core of homology in the junction. The consensus cleavage sequence is 5'-(A/T)TT(C/G)-3'. Cleavage occurs on the 3'-side of the TT dinucleotide at the point of strand exchange. HJ branch migration catalyzed by RuvA-RuvB allows RuvC to scan DNA until it finds its consensus sequence, where it cleaves and resolves the cruciform DNA. The protein is Crossover junction endodeoxyribonuclease RuvC of Rickettsia africae (strain ESF-5).